We begin with the raw amino-acid sequence, 534 residues long: Pentatricopeptide repeat-containing protein At1g07590, mitochondrial (534 aa).

Residues 1-20 (MRSIIALMRQREYFVQAIRR) constitute a mitochondrion transit peptide. 9 PPR repeats span residues 165 to 199 (NELL…GYRT), 200 to 234 (SHLV…KATP), 235 to 269 (HVST…GVEP), 270 to 300 (NEVS…IEKS), 305 to 335 (NWST…IRGF), 339 to 369 (RSKS…MKNV), 374 to 408 (ETEQ…GFKP), 409 to 443 (NSIT…KTSK), and 451 to 485 (WLET…KYNR).

It belongs to the PPR family. P subfamily.

The protein resides in the mitochondrion. The polypeptide is Pentatricopeptide repeat-containing protein At1g07590, mitochondrial (Arabidopsis thaliana (Mouse-ear cress)).